The sequence spans 459 residues: uncharacterized protein (459 aa).

The region spanning 2–60 (NLRVKQKIPLKIKRMGINGEGIGFYKRTLVFVPGALKGEEIFCQITSVKHNFVQARLLT) is the TRAM domain. Positions 73, 79, 82, and 162 each coordinate [4Fe-4S] cluster. Residues glutamine 284, tyrosine 313, aspartate 334, and aspartate 382 each contribute to the S-adenosyl-L-methionine site. Cysteine 409 (nucleophile) is an active-site residue.

The protein belongs to the class I-like SAM-binding methyltransferase superfamily. RNA M5U methyltransferase family.

This is an uncharacterized protein from Streptococcus mutans serotype c (strain ATCC 700610 / UA159).